We begin with the raw amino-acid sequence, 98 residues long: Defensin-like protein 219 (98 aa).

Positions 1-16 (MKTIFVFLTLAVLVSS) are cleaved as a signal peptide. 3 cysteine pairs are disulfide-bonded: C68–C85, C71–C90, and C75–C92.

Belongs to the DEFL family.

The protein resides in the secreted. The protein is Defensin-like protein 219 of Arabidopsis thaliana (Mouse-ear cress).